The sequence spans 366 residues: Polyamine aminopropyltransferase 2 (366 aa).

Residues K20–V58 are compositionally biased toward basic and acidic residues. The tract at residues K20–E61 is disordered. In terms of domain architecture, PABS spans D74 to N305. Q100 contacts S-methyl-5'-thioadenosine. Spermidine is bound by residues H129 and D153. Residues D173 and D207–A208 contribute to the S-methyl-5'-thioadenosine site. The active-site Proton acceptor is D225.

It belongs to the spermidine/spermine synthase family. In terms of assembly, homodimer or homotetramer.

Its subcellular location is the cytoplasm. It catalyses the reaction S-adenosyl 3-(methylsulfanyl)propylamine + putrescine = S-methyl-5'-thioadenosine + spermidine + H(+). Its pathway is amine and polyamine biosynthesis; spermidine biosynthesis; spermidine from putrescine: step 1/1. Its function is as follows. Catalyzes the irreversible transfer of a propylamine group from the amino donor S-adenosylmethioninamine (decarboxy-AdoMet) to putrescine (1,4-diaminobutane) to yield spermidine. This chain is Polyamine aminopropyltransferase 2, found in Bacillus cereus (strain ATCC 14579 / DSM 31 / CCUG 7414 / JCM 2152 / NBRC 15305 / NCIMB 9373 / NCTC 2599 / NRRL B-3711).